A 156-amino-acid chain; its full sequence is Small ribosomal subunit protein uS7 (156 aa).

This sequence belongs to the universal ribosomal protein uS7 family. Part of the 30S ribosomal subunit. Contacts proteins S9 and S11.

Functionally, one of the primary rRNA binding proteins, it binds directly to 16S rRNA where it nucleates assembly of the head domain of the 30S subunit. Is located at the subunit interface close to the decoding center, probably blocks exit of the E-site tRNA. The polypeptide is Small ribosomal subunit protein uS7 (Clostridium botulinum (strain 657 / Type Ba4)).